We begin with the raw amino-acid sequence, 822 residues long: Coiled-coil domain-containing protein 175 (822 aa).

3 coiled-coil regions span residues 129–164, 223–397, and 510–537; these read IIEI…EVLG, IEKQ…KQMM, and HLIE…IEEL.

The protein is Coiled-coil domain-containing protein 175 (Ccdc175) of Mus musculus (Mouse).